We begin with the raw amino-acid sequence, 254 residues long: 4-hydroxy-tetrahydrodipicolinate reductase (254 aa).

NAD(+) contacts are provided by residues 8-13, D35, 86-88, and 110-113; these read GCSGKM, CST, and SANM. Catalysis depends on H143, which acts as the Proton donor/acceptor. H144 is a binding site for (S)-2,3,4,5-tetrahydrodipicolinate. K147 acts as the Proton donor in catalysis. Position 153 to 154 (153 to 154) interacts with (S)-2,3,4,5-tetrahydrodipicolinate; it reads GT.

Belongs to the DapB family.

The protein localises to the cytoplasm. It catalyses the reaction (S)-2,3,4,5-tetrahydrodipicolinate + NAD(+) + H2O = (2S,4S)-4-hydroxy-2,3,4,5-tetrahydrodipicolinate + NADH + H(+). It carries out the reaction (S)-2,3,4,5-tetrahydrodipicolinate + NADP(+) + H2O = (2S,4S)-4-hydroxy-2,3,4,5-tetrahydrodipicolinate + NADPH + H(+). It participates in amino-acid biosynthesis; L-lysine biosynthesis via DAP pathway; (S)-tetrahydrodipicolinate from L-aspartate: step 4/4. Functionally, catalyzes the conversion of 4-hydroxy-tetrahydrodipicolinate (HTPA) to tetrahydrodipicolinate. This Clostridium perfringens (strain SM101 / Type A) protein is 4-hydroxy-tetrahydrodipicolinate reductase.